The chain runs to 1231 residues: S-layer protein A (1231 aa).

A signal peptide spans 1–35; the sequence is MNKTLGLILTSVFLLSTLGIITGFVIPTQAANSND.

The protein belongs to the Sulfolobales SlaA family. The mushroom-shaped unit cells of the Sulfolobales' S-layers may consist of three SlaB subunits and six SlaA subunits.

The protein resides in the secreted. It localises to the cell wall. It is found in the S-layer. Functionally, S-layer large protein. May form the highly ordered outer sheath. The protein is S-layer protein A of Saccharolobus solfataricus (strain ATCC 35092 / DSM 1617 / JCM 11322 / P2) (Sulfolobus solfataricus).